The chain runs to 1378 residues: Tonsoku-like protein (1378 aa).

TPR repeat units lie at residues alanine 27–alanine 60, alanine 67–leucine 100, glutamine 107–glutamate 147, threonine 162–asparagine 195, phenylalanine 202–methionine 235, serine 242–lysine 275, methionine 311–leucine 344, and alanine 352–asparagine 385. Residues alanine 475–arginine 524 form a disordered region. Over residues glutamate 481–glutamate 509 the composition is skewed to acidic residues. The span at leucine 514–asparagine 523 shows a compositional bias: basic residues. ANK repeat units lie at residues methionine 528–proline 557, cysteine 561–aspartate 590, and glutamate 597–leucine 626. The tract at residues alanine 667–arginine 789 is disordered. A compositionally biased stretch (polar residues) spans aspartate 672–serine 684. The span at threonine 691–proline 702 shows a compositional bias: pro residues. Position 719 is a phosphoserine (serine 719). 2 stretches are compositionally biased toward low complexity: residues glycine 736–alanine 753 and alanine 777–arginine 789. Residue arginine 797 is modified to Omega-N-methylarginine. A disordered region spans residues leucine 842 to isoleucine 933. Composition is skewed to polar residues over residues cysteine 883–alanine 899 and serine 907–serine 918. 7 LRR repeats span residues histidine 1069–alanine 1093, methionine 1097–leucine 1122, leucine 1128–serine 1151, alanine 1188–serine 1212, glycine 1247–arginine 1270, cysteine 1275–threonine 1300, and alanine 1331–glutamine 1354.

The protein belongs to the Tonsoku family. Component of the MMS22L-TONSL complex, a complex at least composed of MMS22L and TONSL/NFKBIL2. Interacts with the MCM complex, the FACT complex and the RPA complex. Interacts with MCM5; the interaction is direct. Binds histones, with a strong preference for histone H3.1 (histones H3.1 and H3-4/H3.1t). Interacts (via ANK repeats) with histone H4; specifically binds histone H4 lacking methylation at 'Lys-20' (H4K20me0). May interact with DNAJC9; the interaction seems to be histone-dependent. In terms of tissue distribution, expressed in heart, skeletal muscle and tracheal epithelial cells.

It localises to the nucleus. The protein localises to the chromosome. It is found in the cytoplasm. Its function is as follows. Component of the MMS22L-TONSL complex, a complex that promotes homologous recombination-mediated repair of double-strand breaks (DSBs) at stalled or collapsed replication forks. The MMS22L-TONSL complex is required to maintain genome integrity during DNA replication. It mediates the assembly of RAD51 filaments on single-stranded DNA (ssDNA): the MMS22L-TONSL complex is recruited to DSBs following histone replacement by histone chaperones and eviction of the replication protein A complex (RPA/RP-A) from DSBs. Following recruitment to DSBs, the TONSL-MMS22L complex promotes recruitment of RAD51 filaments and subsequent homologous recombination. Within the complex, TONSL acts as a histone reader, which recognizes and binds newly synthesized histones following their replacement by histone chaperones. Specifically binds histone H4 lacking methylation at 'Lys-20' (H4K20me0) and histone H3.1. The protein is Tonsoku-like protein of Homo sapiens (Human).